The following is a 102-amino-acid chain: Large ribosomal subunit protein bL21 (102 aa).

The protein belongs to the bacterial ribosomal protein bL21 family. In terms of assembly, part of the 50S ribosomal subunit. Contacts protein L20.

Functionally, this protein binds to 23S rRNA in the presence of protein L20. The polypeptide is Large ribosomal subunit protein bL21 (Oceanobacillus iheyensis (strain DSM 14371 / CIP 107618 / JCM 11309 / KCTC 3954 / HTE831)).